A 150-amino-acid polypeptide reads, in one-letter code: C-type lectin mosGCTL-7 (150 aa).

The N-terminal stretch at 1 to 17 (MQLVHVLVVLLSVVAHA) is a signal peptide. In terms of domain architecture, C-type lectin spans 18-140 (KKFFIPNLKA…CRGFKAYIVC (123 aa)). The N-linked (GlcNAc...) asparagine glycan is linked to asparagine 67. Cysteine 111 and cysteine 131 form a disulfide bridge.

As to quaternary structure, interacts with putative receptor-type tyrosine-protein phosphatase mosPTP-1; the interaction probably mediates the recruitment of Japanese encephalitis virus particles in complex with C-type lectin mosGCTL-7 to the cell surface. (Microbial infection) Interacts with envelope protein E (glycosylated) of Japanese encephalitis virus in a calcium-dependent manner.

It is found in the secreted. Carbohydrate-binding protein. In terms of biological role, (Microbial infection) Facilitates Japanese encephalitis virus infection in mosquitoes probably via capturing viral particles and presenting them to a ligand on the cell surface, thereby facilitating viral entry. The sequence is that of C-type lectin mosGCTL-7 from Aedes aegypti (Yellowfever mosquito).